We begin with the raw amino-acid sequence, 1021 residues long: METGQRTSRKVRKLGSNRRRQTREPADGEGAAVAPEPESWSSQAAAELQAFFQDCGAKERGFVTREDLAVAKFSFLGSKEESEMIFDWVDVERKGHLSLEEFSSGLKNIFGSSQSPHRLRRRKPLPSKRVSATTSFPALEEADAEEKEAFLAFMEQLGTGHLLPKQMEIWQLWGQLRQEEPQLAGNLAGFLAKMTSRLQEAQADKEALELTLRKRDSDHHREVQQLYEEMEQQIRQEKQQLQAESDSRGLALTSQMQDVLEAKEREVQRLAEGQRELEAQLSHLRSTHQEAASENQQLQEAKRDLAGRLEEVRGQLQVTRGRLDAARGRVSWQVEEKLSFPGAGEKTPDPQAASPEEAPLPGLFGDNDDWDQLLSNFGSPPHGALQLCWSPPPTPRATSGPQTPRVVRQISISEPQAFLFGQEPSSDPDGAPRTPPGVTFSAKDNKGVDPHEQDIRAEQPVEPHDPDPNQEPGSTPEGRLLWGLSGSLVAPAFKVLIPLEDGPPPPANSPPPQAPAGSSKQIQASDPDDKGPGSWAPPSGAQPGAGAGPQEPTQTPPTMTERETQPGPSPTTALTGVGPAKPPRQRDALQQDLHATGSEPRLGTQRARALTLGPAEPFQGLEFVGPVPTERLEQGQAGPAVQEGLPEGLREAHGQVLGLGELSAFPHQELEEEPRSEEGKQEGRGGQDLSSEQSEQSVEAHGLETAHSELPQQDSLLVSLPSATPQAQVEAEGPTPGKSAPPRGSPPRGAQPGAGAGPQEPTQTPPTMAEQEAQPRPSLTTAHAEEQGPPHSREPRAESRLEDPGMDSREAGLTPSPGDPMAGGGPQANPDYLFHVIFLGDSNVGKTSFLHLLHQNSFATGLTATVGVDFRVKTLLVDNKCFVLQLWDTAGQERYHSMTRQLLRKADGVVLMYDITSQESFAHVRYWLDCLQDAGSDGVVILLLGNKMDCEEERQVSVEAGQQLAQELGVYFGECSAALGHNILEPVVNLARSLRMQEEGLKDSLVKVAPKRPPKRFGCCS.

The interval 1–40 is disordered; it reads METGQRTSRKVRKLGSNRRRQTREPADGEGAAVAPEPESW. Residues 7 to 21 are compositionally biased toward basic residues; the sequence is TSRKVRKLGSNRRRQ. The EF-hand domain maps to 77 to 112; the sequence is GSKEESEMIFDWVDVERKGHLSLEEFSSGLKNIFGS. Positions 113–133 are disordered; the sequence is SQSPHRLRRRKPLPSKRVSAT. The segment covering 117–126 has biased composition (basic residues); the sequence is HRLRRRKPLP. Residues 191 to 315 are a coiled coil; that stretch reads LAKMTSRLQE…AGRLEEVRGQ (125 aa). Disordered regions lie at residues 339–405, 419–483, and 495–827; these read SFPG…QTPR, LFGQ…LLWG, and VLIP…GGPQ. Positions 443–467 are enriched in basic and acidic residues; it reads KDNKGVDPHEQDIRAEQPVEPHDPD. The segment covering 501 to 514 has biased composition (pro residues); that stretch reads DGPPPPANSPPPQA. The span at 532 to 559 shows a compositional bias: low complexity; sequence PGSWAPPSGAQPGAGAGPQEPTQTPPTM. Over residues 676–685 the composition is skewed to basic and acidic residues; it reads SEEGKQEGRG. Composition is skewed to polar residues over residues 688 to 697 and 710 to 727; these read DLSSEQSEQS and LPQQ…TPQA. The span at 736 to 759 shows a compositional bias: low complexity; sequence PGKSAPPRGSPPRGAQPGAGAGPQ. Residues 783 to 810 are compositionally biased toward basic and acidic residues; that stretch reads HAEEQGPPHSREPRAESRLEDPGMDSRE. GTP-binding positions include 840 to 847, 888 to 892, and 946 to 949; these read GDSNVGKT, DTAGQ, and NKMD. 2 S-geranylgeranyl cysteine lipidation sites follow: Cys1019 and Cys1020.

It belongs to the small GTPase superfamily. Rab family.

The protein localises to the cell membrane. The protein is Ras-related protein Rab-44 (RAB44) of Homo sapiens (Human).